Consider the following 176-residue polypeptide: Large ribosomal subunit protein uL6 (176 aa).

A compositionally biased stretch (basic and acidic residues) spans R151 to R170. A disordered region spans residues R151 to K176.

The protein belongs to the universal ribosomal protein uL6 family. Part of the 50S ribosomal subunit.

Functionally, this protein binds to the 23S rRNA, and is important in its secondary structure. It is located near the subunit interface in the base of the L7/L12 stalk, and near the tRNA binding site of the peptidyltransferase center. The protein is Large ribosomal subunit protein uL6 of Shewanella piezotolerans (strain WP3 / JCM 13877).